The primary structure comprises 399 residues: 4-hydroxy-3-methylbut-2-enyl diphosphate reductase (399 aa).

Position 66 (Cys66) interacts with [4Fe-4S] cluster. A (2E)-4-hydroxy-3-methylbut-2-enyl diphosphate-binding site is contributed by His96. Dimethylallyl diphosphate is bound at residue His96. Residue His96 coordinates isopentenyl diphosphate. Cys157 is a [4Fe-4S] cluster binding site. His185 serves as a coordination point for (2E)-4-hydroxy-3-methylbut-2-enyl diphosphate. His185 is a dimethylallyl diphosphate binding site. His185 provides a ligand contact to isopentenyl diphosphate. The Proton donor role is filled by Glu187. Thr250 contacts (2E)-4-hydroxy-3-methylbut-2-enyl diphosphate. Cys288 contributes to the [4Fe-4S] cluster binding site. Residues Ser317, Ser318, Asn319, and Ser380 each contribute to the (2E)-4-hydroxy-3-methylbut-2-enyl diphosphate site. 4 residues coordinate dimethylallyl diphosphate: Ser317, Ser318, Asn319, and Ser380. Isopentenyl diphosphate contacts are provided by Ser317, Ser318, Asn319, and Ser380.

Belongs to the IspH family. [4Fe-4S] cluster serves as cofactor.

The enzyme catalyses isopentenyl diphosphate + 2 oxidized [2Fe-2S]-[ferredoxin] + H2O = (2E)-4-hydroxy-3-methylbut-2-enyl diphosphate + 2 reduced [2Fe-2S]-[ferredoxin] + 2 H(+). It catalyses the reaction dimethylallyl diphosphate + 2 oxidized [2Fe-2S]-[ferredoxin] + H2O = (2E)-4-hydroxy-3-methylbut-2-enyl diphosphate + 2 reduced [2Fe-2S]-[ferredoxin] + 2 H(+). It functions in the pathway isoprenoid biosynthesis; dimethylallyl diphosphate biosynthesis; dimethylallyl diphosphate from (2E)-4-hydroxy-3-methylbutenyl diphosphate: step 1/1. Its pathway is isoprenoid biosynthesis; isopentenyl diphosphate biosynthesis via DXP pathway; isopentenyl diphosphate from 1-deoxy-D-xylulose 5-phosphate: step 6/6. Functionally, catalyzes the conversion of 1-hydroxy-2-methyl-2-(E)-butenyl 4-diphosphate (HMBPP) into a mixture of isopentenyl diphosphate (IPP) and dimethylallyl diphosphate (DMAPP). Acts in the terminal step of the DOXP/MEP pathway for isoprenoid precursor biosynthesis. In Synechococcus sp. (strain CC9605), this protein is 4-hydroxy-3-methylbut-2-enyl diphosphate reductase.